An 876-amino-acid chain; its full sequence is Inter-alpha-trypsin inhibitor heavy chain H3 (876 aa).

Residues 1 to 18 form the signal peptide; that stretch reads MVALSHLGSALQLGSLWG. Residues 19–31 constitute a propeptide that is removed on maturation; the sequence is FPRSPFRLLGKRS. The VIT domain maps to 26–155; it reads LLGKRSLPEG…KVTFELTYEE (130 aa). N-linked (GlcNAc...) asparagine glycosylation is present at Asn-88. In terms of domain architecture, VWFA spans 281-464; the sequence is NVAFVIDISG…LQLQGFYEEV (184 aa). An N-linked (GlcNAc...) asparagine glycan is attached at Asn-577. Aspartate 1-(chondroitin 4-sulfate)-ester is present on Asp-637. Positions 638–876 are excised as a propeptide; it reads PHFIIQVPEK…HTDYIVPNLF (239 aa).

Belongs to the ITIH family. As to quaternary structure, I-alpha-I plasma protease inhibitors are assembled from one or two heavy chains (HC) and one light chain, bikunin. Pre-alpha-inhibitor (P-alpha-I) is composed of ITIH3/HC3 and bikunin. Post-translationally, heavy chains are linked to bikunin via chondroitin 4-sulfate esterified to the alpha-carboxyl of the C-terminal aspartate after propeptide cleavage.

It is found in the secreted. In terms of biological role, may act as a carrier of hyaluronan in serum or as a binding protein between hyaluronan and other matrix protein, including those on cell surfaces in tissues to regulate the localization, synthesis and degradation of hyaluronan which are essential to cells undergoing biological processes. The sequence is that of Inter-alpha-trypsin inhibitor heavy chain H3 (ITIH3) from Pongo abelii (Sumatran orangutan).